The following is a 155-amino-acid chain: Small ribosomal subunit protein uS7 (155 aa).

Belongs to the universal ribosomal protein uS7 family. In terms of assembly, part of the 30S ribosomal subunit. Contacts proteins S9 and S11.

Its function is as follows. One of the primary rRNA binding proteins, it binds directly to 16S rRNA where it nucleates assembly of the head domain of the 30S subunit. Is located at the subunit interface close to the decoding center, probably blocks exit of the E-site tRNA. The polypeptide is Small ribosomal subunit protein uS7 (Chlorobium chlorochromatii (strain CaD3)).